We begin with the raw amino-acid sequence, 439 residues long: Trigger factor (439 aa).

Residues 158–233 (GDVINIEYTI…IKEVLKRTLM (76 aa)) form the PPIase FKBP-type domain. A disordered region spans residues 410 to 439 (KEISADEPVEEQKEEEEKEEAGSENSENKE). The segment covering 414–428 (ADEPVEEQKEEEEKE) has biased composition (acidic residues).

This sequence belongs to the FKBP-type PPIase family. Tig subfamily.

It is found in the cytoplasm. The enzyme catalyses [protein]-peptidylproline (omega=180) = [protein]-peptidylproline (omega=0). In terms of biological role, involved in protein export. Acts as a chaperone by maintaining the newly synthesized protein in an open conformation. Functions as a peptidyl-prolyl cis-trans isomerase. The polypeptide is Trigger factor (Kosmotoga olearia (strain ATCC BAA-1733 / DSM 21960 / TBF 19.5.1)).